A 151-amino-acid chain; its full sequence is UPF0178 protein Pfl01_5469 (151 aa).

The protein belongs to the UPF0178 family.

This Pseudomonas fluorescens (strain Pf0-1) protein is UPF0178 protein Pfl01_5469.